Reading from the N-terminus, the 914-residue chain is DNA mismatch repair protein MutS (914 aa).

The tract at residues 28–74 (NTNSVKDSNLNDEELSKNAELRPRKRKKSVLLQNSVGEQTEDFSNDE) is disordered. 726 to 733 (GPNASGKS) is an ATP binding site.

The protein belongs to the DNA mismatch repair MutS family.

In terms of biological role, this protein is involved in the repair of mismatches in DNA. It is possible that it carries out the mismatch recognition step. This protein has a weak ATPase activity. This chain is DNA mismatch repair protein MutS, found in Prochlorococcus marinus (strain SARG / CCMP1375 / SS120).